The following is a 408-amino-acid chain: Secreted effector protein SseJ (408 aa).

The Nucleophile role is filled by Ser151. Catalysis depends on residues Asp381 and His384.

This sequence belongs to the 'GDSL' lipolytic enzyme family. As to quaternary structure, interacts with RhoA and indirectly with SifA.

Its subcellular location is the secreted. The protein localises to the host cytoplasm. In terms of biological role, effector proteins function to alter host cell physiology and promote bacterial survival in host tissues. This protein is required for endosomal tubulation and negatively regulates the formation of Salmonella-induced filaments (Sifs) in epithelial cells. Has both deacylase and esterification activities in vitro, but esterification is probably the dominant activity in host cells. Significantly contributes to cholesterol esterification, which reduces cellular cholesterol in cells and abrogates the ability of SifA to associate with cholesterol and LAMP-1 vesicles. The polypeptide is Secreted effector protein SseJ (sseJ) (Salmonella typhimurium (strain LT2 / SGSC1412 / ATCC 700720)).